The primary structure comprises 244 residues: 5'-deoxynucleotidase (244 aa).

It carries out the reaction a 2'-deoxyribonucleoside 5'-phosphate + H2O = a 2'-deoxyribonucleoside + phosphate. Following host DNA degradation, is responsible for the degradation of 5'-dNMP's to deoxynucleosides that can be further excreted. Active on deoxynucleoside 5'-monophosphates but not active as a phosphatase on ribonucleotides, deoxynucleoside 5'-triphosphates, deoxynucleoside 3'-monophosphates, or deoxyoligonucleotides. This is 5'-deoxynucleotidase (dmp) from Escherichia coli (Enterobacteria phage T5).